A 389-amino-acid polypeptide reads, in one-letter code: S-adenosylmethionine synthase (389 aa).

H15 provides a ligand contact to ATP. Residue D17 participates in Mg(2+) binding. Position 43 (E43) interacts with K(+). Positions 56 and 99 each coordinate L-methionine. The tract at residues 99–109 (QSSDIQYSIDH) is flexible loop. Residues 166–168 (DAK), 232–233 (RF), D241, 247–248 (RK), S264, and K268 contribute to the ATP site. An L-methionine-binding site is contributed by D241. K272 contacts L-methionine.

This sequence belongs to the AdoMet synthase family. As to quaternary structure, homotetramer; dimer of dimers. The cofactor is Mg(2+). It depends on K(+) as a cofactor.

The protein resides in the cytoplasm. The catalysed reaction is L-methionine + ATP + H2O = S-adenosyl-L-methionine + phosphate + diphosphate. Its pathway is amino-acid biosynthesis; S-adenosyl-L-methionine biosynthesis; S-adenosyl-L-methionine from L-methionine: step 1/1. In terms of biological role, catalyzes the formation of S-adenosylmethionine (AdoMet) from methionine and ATP. The overall synthetic reaction is composed of two sequential steps, AdoMet formation and the subsequent tripolyphosphate hydrolysis which occurs prior to release of AdoMet from the enzyme. This chain is S-adenosylmethionine synthase, found in Blochmanniella pennsylvanica (strain BPEN).